The sequence spans 451 residues: MASRVNTSFTLIPKQKCRRSNHHSSYFCNTLDSDPQLLSTLGNFKVLPLEILHIILRYLSVKDIGMLSMVSKTVSQHIINYISTSSGSRRLLLQNFHDLDLPGTKEETALLEHYRALGLLFKRCTLLLPTKERLKYIHKILSEVSCFKFSGCSVPLQCLGLSCYGMFLQTLTAGWDELECHRVYNFLCELTNLSRKMQTVVCNKPGSARKLELRVRLFCRNVLLDHWTHRSDSAFWLTRILKPWPMVNQARLLYIIFGPTSPHDGQVIWQEMIEGPTDESSLKGLANAIKLLYDTGAKGWTADDVISLVDELSVVPREWLLENNARLLILSGNNICFTFMASKAVNGRAVELARLVVFLALVCEKELYCMDWTVRMMQKVCKVFSTAAERKSFLQSIANAFACVTMEMLQPVMSGDRDDDDRGFLNLFHLLHAQANFHKEVLYLTMNAISS.

An F-box domain is found at Leu41–Leu91.

In terms of assembly, part of a SCF (SKP1-cullin-F-box) protein ligase complex.

Functionally, probably recognizes and binds to some phosphorylated proteins and promotes their ubiquitination and degradation. This is F-box only protein 47 (Fbxo47) from Mus musculus (Mouse).